Reading from the N-terminus, the 715-residue chain is Probable GTP diphosphokinase RSH3, chloroplastic (715 aa).

The transit peptide at 1–64 directs the protein to the chloroplast; it reads MVVATTIALY…LLFSGASVKS (64 aa). A compositionally biased stretch (low complexity) spans 65 to 74; sequence SSSSSSSHPS. Residues 65-84 form a disordered region; the sequence is SSSSSSSHPSVGEELASIRH. Residues 237-341 form the HD domain; sequence YLQHCVETAM…IKLADRLHNM (105 aa).

It belongs to the RelA/SpoT family. As to expression, expressed in roots, hypocotyls, shoots, cotyledons, rosette and cauline leaves, stems, petals, sepals, stamens, pistils and siliques.

Its subcellular location is the plastid. It is found in the chloroplast. The catalysed reaction is GTP + ATP = guanosine 3'-diphosphate 5'-triphosphate + AMP. Functionally, possesses ppGpp (guanosine 3'-diphosphate 5'-diphosphate) synthetase activity in vitro and is able to functionally complement E.coli relA mutants. May be involved in a rapid plant ppGpp-mediated response to pathogens and other stresses. The sequence is that of Probable GTP diphosphokinase RSH3, chloroplastic (RSH3) from Arabidopsis thaliana (Mouse-ear cress).